Reading from the N-terminus, the 549-residue chain is Nectin-3 (549 aa).

Residues 1 to 57 (MARTPGPAPLCPGGGKAQLSSAFPPAAGLLLPAPTPPPLLLLLIPLLLFSRLCGALA) form the signal peptide. The Ig-like V-type domain occupies 58–165 (GSIIVEPHVT…GNAQSSTTVT (108 aa)). Topologically, residues 58-404 (GSIIVEPHVT…ATLKDDTIGT (347 aa)) are extracellular. Residues N73, N83, N125, N186, N222, and N331 are each glycosylated (N-linked (GlcNAc...) asparagine). A disulfide bond links C78 and C148. 2 Ig-like C2-type domains span residues 170–258 (PTVS…KDIR) and 269–354 (PEVS…KVIY). 2 disulfide bridges follow: C193–C246 and C291–C338. Residues 405–425 (IIASVVGGALFLVLVSILAGV) traverse the membrane as a helical segment. Residues 426 to 549 (FCYRRRRTFR…SVISRREWYV (124 aa)) lie on the Cytoplasmic side of the membrane.

This sequence belongs to the nectin family. In terms of assembly, cis- and trans-homodimer. Can form trans-heterodimers with NECTIN1, NECTIN2, PVR, IGSF4B/Necl-1 and with IGSF4. Interaction between NECTIN1 and NECTIN3 on the pre- and postsynaptic sites, respectively, initiates the formation of puncta adherentia junctions between axons and dendrites. Interacts (via Cytoplasmic domain) with AFDN, providing a connection with the actin cytoskeleton. Binds with low affinity to TIGIT. In terms of tissue distribution, ubiquitous with high expression in testes. Localized in spermatids at Sertoli-spermatid junctions. Expressed in ovarian granulosa cells, but only faintly expressed after ovulation.

It localises to the cell membrane. The protein resides in the postsynaptic cell membrane. Its subcellular location is the cell junction. It is found in the adherens junction. Its function is as follows. Cell adhesion molecule that promotes cell-cell adhesion through heterophilic trans-interactions with nectins-like or other nectins, such as trans-interaction with NECTIN2 at Sertoli-spermatid junctions. Trans-interaction with PVR induces activation of CDC42 and RAC small G proteins through common signaling molecules such as SRC and RAP1. Induces endocytosis-mediated down-regulation of PVR from the cell surface, resulting in reduction of cell movement and proliferation. Involved in axon guidance by promoting contacts between the commissural axons and the floor plate cells. Also involved in the formation of cell-cell junctions, including adherens junctions and synapses. Promotes formation of checkerboard-like cellular pattern of hair cells and supporting cells in the auditory epithelium via heterophilic interaction with NECTIN1: NECTIN1 is present in the membrane of hair cells and associates with NECTIN3 on supporting cells, thereby mediating heterotypic adhesion between these two cell types. Plays a role in the morphology of the ciliary body. This chain is Nectin-3, found in Mus musculus (Mouse).